Consider the following 78-residue polypeptide: DNA-directed RNA polymerase subunit Rpo5 (78 aa).

This sequence belongs to the archaeal Rpo5/eukaryotic RPB5 RNA polymerase subunit family. As to quaternary structure, part of the RNA polymerase complex.

It is found in the cytoplasm. The enzyme catalyses RNA(n) + a ribonucleoside 5'-triphosphate = RNA(n+1) + diphosphate. DNA-dependent RNA polymerase (RNAP) catalyzes the transcription of DNA into RNA using the four ribonucleoside triphosphates as substrates. The sequence is that of DNA-directed RNA polymerase subunit Rpo5 from Methanosarcina acetivorans (strain ATCC 35395 / DSM 2834 / JCM 12185 / C2A).